The chain runs to 361 residues: Cdc42 effector protein 1 (361 aa).

The interval 1–29 (MPGPQGAGGAPAMNLGKLSPVGWVSSSQG) is disordered. Phosphoserine occurs at positions 19 and 27. T34 carries the post-translational modification Phosphothreonine. One can recognise a CRIB domain in the interval 38–52 (ISPPLGDFRHTMHVG). S39 carries the phosphoserine modification. An Omega-N-methylarginine modification is found at R53. S65, S73, S77, S101, S113, S121, S139, S180, S190, S192, and S195 each carry phosphoserine. The disordered stretch occupies residues 161-186 (CTISRLPRPEKPRDRDRDSSFPAEPE). Basic and acidic residues predominate over residues 167–186 (PRPEKPRDRDRDSSFPAEPE). Disordered stretches follow at residues 218-300 (EGSA…SRHH) and 320-361 (SWGS…EVKV). A run of 4 repeats spans residues 220-226 (SAAETPA), 229-235 (PAASPPA), 236-242 (SVANPPA), and 243-249 (PASSPSL). A 4 X 7 AA tandem repeats of [PT]-[AT]-A-[ENT]-[PT]-[PTS]-[AG] region spans residues 220-249 (SAAETPAPAPAASPPASVANPPAPASSPSL). A phosphoserine mark is found at S270, S320, and S323. The segment covering 332-347 (QAGSRTPVPSTVQANT) has biased composition (polar residues). Positions 351–361 (ADAEEDDEVKV) are enriched in acidic residues.

The protein belongs to the BORG/CEP family. In terms of assembly, interacts with RHOQ and CDC42, in a GTP-dependent manner.

The protein resides in the endomembrane system. It localises to the cytoplasm. The protein localises to the cytoskeleton. Functionally, probably involved in the organization of the actin cytoskeleton. Induced membrane extensions in fibroblasts. The chain is Cdc42 effector protein 1 from Bos taurus (Bovine).